The sequence spans 165 residues: Fibrinogen-binding protein (165 aa).

An N-terminal signal peptide occupies residues methionine 1–alanine 29.

As to quaternary structure, interacts with host fibrinogen alpha chain/FGA. Interacts with host complement protein C3.

The protein localises to the secreted. Functionally, extracellular fibrinogen-binding protein that plays an important role in virulence. By interacting with the alpha chain of fibrinogen and its derivative fibrin, enhances a non-functional interaction between fibrinogen and platelets and is responsible for repression of fibrinogen-dependent platelet aggregation. In addition, assembles a fibrinogen protective shield around the bacteria which results in impaired phagocytic clearance by the host. Mechanistically, interacts with host complement C3b deposited on the surface of the bacterium via its C-terminal and then recruits fibrinogen via its N-terminal. This Staphylococcus aureus (strain MRSA252) protein is Fibrinogen-binding protein (fib).